We begin with the raw amino-acid sequence, 163 residues long: MPDRKGDRGRHQARKRAVDLLFEAEARGITAAEVAEARNALAEKRTDDIATLNPYTVTVAQGVTAHAAHIDDLISAHLQGWTLDRLPAVDRAILRVAVWELLHAEDVPEPVAVDEAVELAKQLSTDDSPGFVNGVLGQVMLVTPQIRAAAAAMQGGHNGGSGT.

It belongs to the NusB family.

Involved in transcription antitermination. Required for transcription of ribosomal RNA (rRNA) genes. Binds specifically to the boxA antiterminator sequence of the ribosomal RNA (rrn) operons. This is Transcription antitermination protein NusB from Mycolicibacterium vanbaalenii (strain DSM 7251 / JCM 13017 / BCRC 16820 / KCTC 9966 / NRRL B-24157 / PYR-1) (Mycobacterium vanbaalenii).